A 145-amino-acid chain; its full sequence is D-aminoacyl-tRNA deacylase (145 aa).

Residues 137-138 (GP) carry the Gly-cisPro motif, important for rejection of L-amino acids motif.

The protein belongs to the DTD family. Homodimer.

The protein resides in the cytoplasm. It catalyses the reaction glycyl-tRNA(Ala) + H2O = tRNA(Ala) + glycine + H(+). The enzyme catalyses a D-aminoacyl-tRNA + H2O = a tRNA + a D-alpha-amino acid + H(+). Functionally, an aminoacyl-tRNA editing enzyme that deacylates mischarged D-aminoacyl-tRNAs. Also deacylates mischarged glycyl-tRNA(Ala), protecting cells against glycine mischarging by AlaRS. Acts via tRNA-based rather than protein-based catalysis; rejects L-amino acids rather than detecting D-amino acids in the active site. By recycling D-aminoacyl-tRNA to D-amino acids and free tRNA molecules, this enzyme counteracts the toxicity associated with the formation of D-aminoacyl-tRNA entities in vivo and helps enforce protein L-homochirality. The chain is D-aminoacyl-tRNA deacylase from Shewanella piezotolerans (strain WP3 / JCM 13877).